The chain runs to 202 residues: Dephospho-CoA kinase (202 aa).

The 198-residue stretch at 4 to 201 (VVALTGGIAS…QKYLAMSRQN (198 aa)) folds into the DPCK domain. ATP is bound at residue 12-17 (ASGKTT).

The protein belongs to the CoaE family.

It is found in the cytoplasm. The enzyme catalyses 3'-dephospho-CoA + ATP = ADP + CoA + H(+). It participates in cofactor biosynthesis; coenzyme A biosynthesis; CoA from (R)-pantothenate: step 5/5. Its function is as follows. Catalyzes the phosphorylation of the 3'-hydroxyl group of dephosphocoenzyme A to form coenzyme A. This chain is Dephospho-CoA kinase, found in Vibrio cholerae serotype O1 (strain ATCC 39315 / El Tor Inaba N16961).